A 193-amino-acid chain; its full sequence is uncharacterized protein (193 aa).

Positions 1 to 144 (MEKKRTLSVN…NNNNNNEGTI (144 aa)) are disordered. Over residues 29–86 (NSLNNIENNECNNNNNNNNNNNNNNSNSNNLNNSNNNNINTSSNSINSSNSINNSIDN) the composition is skewed to low complexity. Positions 103–118 (KMNSSQEFQSYLTPNK) are enriched in polar residues. Over residues 119-140 (NNNNRNNNNRNNNNNNNNNNNN) the composition is skewed to low complexity. Residues 158–180 (YMIRPFLVGASASFGISIGMFYF) form a helical membrane-spanning segment.

It is found in the membrane. This is an uncharacterized protein from Dictyostelium discoideum (Social amoeba).